A 147-amino-acid polypeptide reads, in one-letter code: Large ribosomal subunit protein uL15 (147 aa).

Residues 1–58 are disordered; that stretch reads MRLHDLKPAEGSTKKKKRVGRGIGSGHGKTSGRGHKGQNARSGGGVRPGFEGGQMPLT. Positions 42–52 are enriched in gly residues; that stretch reads SGGGVRPGFEG.

This sequence belongs to the universal ribosomal protein uL15 family. As to quaternary structure, part of the 50S ribosomal subunit.

Its function is as follows. Binds to the 23S rRNA. The protein is Large ribosomal subunit protein uL15 of Caldanaerobacter subterraneus subsp. tengcongensis (strain DSM 15242 / JCM 11007 / NBRC 100824 / MB4) (Thermoanaerobacter tengcongensis).